The following is a 659-amino-acid chain: Tetratricopeptide repeat protein 30 homolog (659 aa).

TPR repeat units follow at residues 3-36 (SQNMLIRDGEYTKSIYTMIKEERFQEAINVLNGI), 43-76 (RAGLSLLGHCYYQTQDFIEASNCYEYLVNLVPDV), 143-176 (ATVKNDEGCLLFQANMFEDALQRYVSALQAGGFN), 178-210 (HIAYNAALCHYRKKENSQALNYIAEIVERGIRN), 391-424 (CRSAPDQNALRVALREYEFALESYLPVAMARAWI), 450-483 (TWRLHAAHVLFMRGDRYKEAAAFYEPIVRQNYDD), and 533-566 (CIVNLVIGTLYCAKGNYEFGLSRIAHALDGGSGA).

The protein belongs to the TTC30/dfy-1/fleer family.

The protein localises to the cell projection. The protein resides in the cilium. Functionally, required for polyglutamylation of axonemal tubulin in sensory cilia. Plays a role in anterograde intraflagellar transport (IFT), the process by which cilia precursors are transported from the base of the cilium to the site of their incorporation at the tip. This Aedes aegypti (Yellowfever mosquito) protein is Tetratricopeptide repeat protein 30 homolog.